The chain runs to 629 residues: MFYQDPFDVIIIGGGHAGTEAAMAAARMGQQTLLLTHNIDTLGQMSCNPAIGGIGKGHLVKEVDALGGLMAKAIDQAGIQFRILNASKGPAVRATRAQADRVLYRQAVRTALENQPNLMIFQQAVEDLIVENDRVVGAVTQMGLKFRAKAVVLTVGTFLDGKIHIGLDNYSGGRAGDPPSIPLSRRLRELPLRVSRLKTGTPPRIDARTIDFSVLAQQHGDNPMPVFSFMGNASQHPQQVPCYITHTNEKTHDVIRNNLDRSPMYAGVIEGIGPRYCPSIEDKVMRFADRNQHQIFLEPEGLTSNEIYPNGISTSLPFDVQMQIVRSMQGMENAKIVRPGYAIEYDFFDPRDLKPTLESKFIHGLFFAGQINGTTGYEEAAAQGLLAGLNAARLSADKEGWAPARSQAYLGVLVDDLCTLGTKEPYRMFTSRAEYRLMLREDNADLRLTEMGRELGLVDDERWARFNEKLESIERERQRLKSTWVTPSAESADEVNAHLTTPLSREASGEDLLRRPEMTYAQLTSLAAFAPALEDEQAAEQVEIQVKYEGYIARQQDEIEKQLRNENTLLPATLDYRQVSGLSNEVIAKLNDHKPASIGQASRISGVTPAAISILLVWLKKQGMLRRSA.

FAD contacts are provided by residues 13–18 (GGGHAG), Val125, and Ser180. 273-287 (GPRYCPSIEDKVMRF) is an NAD(+) binding site. Position 370 (Gln370) interacts with FAD.

The protein belongs to the MnmG family. In terms of assembly, homodimer. Heterotetramer of two MnmE and two MnmG subunits. It depends on FAD as a cofactor.

It is found in the cytoplasm. Functionally, NAD-binding protein involved in the addition of a carboxymethylaminomethyl (cmnm) group at the wobble position (U34) of certain tRNAs, forming tRNA-cmnm(5)s(2)U34. The chain is tRNA uridine 5-carboxymethylaminomethyl modification enzyme MnmG from Salmonella dublin (strain CT_02021853).